We begin with the raw amino-acid sequence, 230 residues long: tRNA (guanine-N(7)-)-methyltransferase (230 aa).

S-adenosyl-L-methionine contacts are provided by E61, E86, D113, and D135. D135 is an active-site residue. Residues K139, D171, and 209–212 each bind substrate; that span reads TRYE.

It belongs to the class I-like SAM-binding methyltransferase superfamily. TrmB family.

The enzyme catalyses guanosine(46) in tRNA + S-adenosyl-L-methionine = N(7)-methylguanosine(46) in tRNA + S-adenosyl-L-homocysteine. The protein operates within tRNA modification; N(7)-methylguanine-tRNA biosynthesis. In terms of biological role, catalyzes the formation of N(7)-methylguanine at position 46 (m7G46) in tRNA. The chain is tRNA (guanine-N(7)-)-methyltransferase from Rhizobium etli (strain ATCC 51251 / DSM 11541 / JCM 21823 / NBRC 15573 / CFN 42).